Reading from the N-terminus, the 133-residue chain is Profilin-3 (133 aa).

This sequence belongs to the profilin family. As to quaternary structure, occurs in many kinds of cells as a complex with monomeric actin in a 1:1 ratio.

Its subcellular location is the cytoplasm. The protein resides in the cytoskeleton. Binds to actin and affects the structure of the cytoskeleton. At high concentrations, profilin prevents the polymerization of actin, whereas it enhances it at low concentrations. By binding to PIP2, it inhibits the formation of IP3 and DG. In Nicotiana tabacum (Common tobacco), this protein is Profilin-3 (PRO3).